We begin with the raw amino-acid sequence, 528 residues long: Probable cyclic di-GMP phosphodiesterase PdeC (528 aa).

The next 2 membrane-spanning stretches (helical) occupy residues 14–34 (GIIF…FLWA) and 242–262 (HLIF…LLWL). The region spanning 268–520 (YLSPKRKLQR…VFMQWMEQLP (253 aa)) is the EAL domain.

The protein localises to the cell inner membrane. The catalysed reaction is 3',3'-c-di-GMP + H2O = 5'-phosphoguanylyl(3'-&gt;5')guanosine + H(+). In terms of biological role, phosphodiesterase (PDE) that catalyzes the hydrolysis of cyclic-di-GMP (c-di-GMP) to 5'-pGpG. Cyclic-di-GMP is a second messenger which controls cell surface-associated traits in bacteria. Overexpression reduces biofilm formation. The protein is Probable cyclic di-GMP phosphodiesterase PdeC of Escherichia coli (strain K12).